The chain runs to 568 residues: 2-succinyl-5-enolpyruvyl-6-hydroxy-3-cyclohexene-1-carboxylate synthase (568 aa).

This sequence belongs to the TPP enzyme family. MenD subfamily. In terms of assembly, homodimer. It depends on Mg(2+) as a cofactor. Mn(2+) is required as a cofactor. The cofactor is thiamine diphosphate.

The catalysed reaction is isochorismate + 2-oxoglutarate + H(+) = 5-enolpyruvoyl-6-hydroxy-2-succinyl-cyclohex-3-ene-1-carboxylate + CO2. It functions in the pathway quinol/quinone metabolism; 1,4-dihydroxy-2-naphthoate biosynthesis; 1,4-dihydroxy-2-naphthoate from chorismate: step 2/7. It participates in quinol/quinone metabolism; menaquinone biosynthesis. Its function is as follows. Catalyzes the thiamine diphosphate-dependent decarboxylation of 2-oxoglutarate and the subsequent addition of the resulting succinic semialdehyde-thiamine pyrophosphate anion to isochorismate to yield 2-succinyl-5-enolpyruvyl-6-hydroxy-3-cyclohexene-1-carboxylate (SEPHCHC). This chain is 2-succinyl-5-enolpyruvyl-6-hydroxy-3-cyclohexene-1-carboxylate synthase, found in Haemophilus influenzae (strain 86-028NP).